The primary structure comprises 233 residues: Glycerol-3-phosphate acyltransferase (233 aa).

The next 5 membrane-spanning stretches (helical) occupy residues 7–27 (WIII…GYII), 94–114 (ISIV…YIGF), 127–147 (VIAI…IVAF), 153–173 (SIGS…GVLI), and 185–205 (ISYE…LLII).

This sequence belongs to the PlsY family. As to quaternary structure, probably interacts with PlsX.

The protein resides in the cell membrane. It catalyses the reaction an acyl phosphate + sn-glycerol 3-phosphate = a 1-acyl-sn-glycero-3-phosphate + phosphate. Its pathway is lipid metabolism; phospholipid metabolism. Functionally, catalyzes the transfer of an acyl group from acyl-phosphate (acyl-PO(4)) to glycerol-3-phosphate (G3P) to form lysophosphatidic acid (LPA). This enzyme utilizes acyl-phosphate as fatty acyl donor, but not acyl-CoA or acyl-ACP. This chain is Glycerol-3-phosphate acyltransferase, found in Acholeplasma laidlawii.